The primary structure comprises 840 residues: MLLFSSSSLQLREIFFPRIFSVFVKLNFLNSRGFSSDSAKALAAGISKAIKEGNFNLLDSSVYGSNLQRNETNLVLLSLESEPNSALKYFRWAEISGKDPSFYTIAHVLIRNGMFDVADKVFDEMITNRGKDFNVLGSIRDRSLDADVCKFLMECCCRYGMVDKALEIFVYSTQLGVVIPQDSVYRMLNSLIGSDRVDLIADHFDKLCRGGIEPSGVSAHGFVLDALFCKGEVTKALDFHRLVMERGFRVGIVSCNKVLKGLSVDQIEVASRLLSLVLDCGPAPNVVTFCTLINGFCKRGEMDRAFDLFKVMEQRGIEPDLIAYSTLIDGYFKAGMLGMGHKLFSQALHKGVKLDVVVFSSTIDVYVKSGDLATASVVYKRMLCQGISPNVVTYTILIKGLCQDGRIYEAFGMYGQILKRGMEPSIVTYSSLIDGFCKCGNLRSGFALYEDMIKMGYPPDVVIYGVLVDGLSKQGLMLHAMRFSVKMLGQSIRLNVVVFNSLIDGWCRLNRFDEALKVFRLMGIYGIKPDVATFTTVMRVSIMEGRLEEALFLFFRMFKMGLEPDALAYCTLIDAFCKHMKPTIGLQLFDLMQRNKISADIAVCNVVIHLLFKCHRIEDASKFFNNLIEGKMEPDIVTYNTMICGYCSLRRLDEAERIFELLKVTPFGPNTVTLTILIHVLCKNNDMDGAIRMFSIMAEKGSKPNAVTYGCLMDWFSKSVDIEGSFKLFEEMQEKGISPSIVSYSIIIDGLCKRGRVDEATNIFHQAIDAKLLPDVVAYAILIRGYCKVGRLVEAALLYEHMLRNGVKPDDLLQRALSEYNPPKWLMSKGVWVHDKPMPD.

PPR repeat units lie at residues 98-128 (KDPSFYTIAHVLIRNGMFDVADKVFDEMITN), 145-179 (DADVCKFLMECCCRYGMVDKALEIFVYSTQLGVVI), 180-214 (PQDSVYRMLNSLIGSDRVDLIADHFDKLCRGGIEP), 216-250 (GVSAHGFVLDALFCKGEVTKALDFHRLVMERGFRV), 251-284 (GIVSCNKVLKGLSVDQIEVASRLLSLVLDCGPAP), 285-319 (NVVTFCTLINGFCKRGEMDRAFDLFKVMEQRGIEP), 320-354 (DLIAYSTLIDGYFKAGMLGMGHKLFSQALHKGVKL), 355-389 (DVVVFSSTIDVYVKSGDLATASVVYKRMLCQGISP), 390-424 (NVVTYTILIKGLCQDGRIYEAFGMYGQILKRGMEP), 425-459 (SIVTYSSLIDGFCKCGNLRSGFALYEDMIKMGYPP), 460-494 (DVVIYGVLVDGLSKQGLMLHAMRFSVKMLGQSIRL), 495-529 (NVVVFNSLIDGWCRLNRFDEALKVFRLMGIYGIKP), 530-564 (DVATFTTVMRVSIMEGRLEEALFLFFRMFKMGLEP), 565-599 (DALAYCTLIDAFCKHMKPTIGLQLFDLMQRNKISA), 600-634 (DIAVCNVVIHLLFKCHRIEDASKFFNNLIEGKMEP), 635-669 (DIVTYNTMICGYCSLRRLDEAERIFELLKVTPFGP), 670-704 (NTVTLTILIHVLCKNNDMDGAIRMFSIMAEKGSKP), 705-739 (NAVTYGCLMDWFSKSVDIEGSFKLFEEMQEKGISP), 740-774 (SIVSYSIIIDGLCKRGRVDEATNIFHQAIDAKLLP), and 775-809 (DVVAYAILIRGYCKVGRLVEAALLYEHMLRNGVKP).

This sequence belongs to the PPR family. P subfamily.

This is Putative pentatricopeptide repeat-containing protein At1g31840 from Arabidopsis thaliana (Mouse-ear cress).